A 450-amino-acid chain; its full sequence is Glucose-6-phosphate isomerase (450 aa).

E290 (proton donor) is an active-site residue. Residues H311 and K425 contribute to the active site.

This sequence belongs to the GPI family.

It localises to the cytoplasm. The enzyme catalyses alpha-D-glucose 6-phosphate = beta-D-fructose 6-phosphate. The protein operates within carbohydrate biosynthesis; gluconeogenesis. It participates in carbohydrate degradation; glycolysis; D-glyceraldehyde 3-phosphate and glycerone phosphate from D-glucose: step 2/4. Its function is as follows. Catalyzes the reversible isomerization of glucose-6-phosphate to fructose-6-phosphate. The sequence is that of Glucose-6-phosphate isomerase from Alkaliphilus metalliredigens (strain QYMF).